Here is a 760-residue protein sequence, read N- to C-terminus: Xaa-Pro dipeptidyl-peptidase (760 aa).

Catalysis depends on charge relay system residues Ser349, Asp469, and His499.

This sequence belongs to the peptidase S15 family. As to quaternary structure, homodimer.

The protein localises to the cytoplasm. It catalyses the reaction Hydrolyzes Xaa-Pro-|- bonds to release unblocked, N-terminal dipeptides from substrates including Ala-Pro-|-p-nitroanilide and (sequentially) Tyr-Pro-|-Phe-Pro-|-Gly-Pro-|-Ile.. Removes N-terminal dipeptides sequentially from polypeptides having unsubstituted N-termini provided that the penultimate residue is proline. The polypeptide is Xaa-Pro dipeptidyl-peptidase (Streptococcus pyogenes serotype M5 (strain Manfredo)).